The chain runs to 936 residues: Aftiphilin (936 aa).

The interval 1–36 (MEPDIIRMYSSSPPPLDNGAEDDDDDEFGEFGGFSE) is disordered. The interval 1–523 (MEPDIIRMYS…ARKSSGTGTE (523 aa)) is interaction with AP1G1, AP1G2, GGA1 and GGA3. Over residues 19–29 (GAEDDDDDEFG) the composition is skewed to acidic residues. The short motif at 28 to 31 (FGEF) is the WXXF motif 1 element. Serine 151 is modified (phosphoserine). 2 disordered regions span residues 197–216 (TDDL…STHS) and 374–409 (KTSD…LDDS). Positions 374-389 (KTSDDEVGSPKEESRK) are enriched in basic and acidic residues. Residues 386–610 (ESRKFTNFQS…EAWQSHRTDE (225 aa)) are interaction with AP1G1. The residue at position 395 (serine 395) is a Phosphoserine. Positions 432–435 (FGDF) match the WXXF motif 2 motif. Residues 436–438 (GDF) carry the WXXF motif 3 (partial) motif. The WXXF motif 4 signature appears at 478–481 (FGEF). The residue at position 518 (serine 518) is a Phosphoserine. The interval 589–637 (GDQQATESHHRKEAWQSHRTDENIDTPGTPKTHSVPSATSKGAVASGHL) is disordered. Residues 595 to 610 (ESHHRKEAWQSHRTDE) show a composition bias toward basic and acidic residues. Phosphothreonine is present on threonine 617. The span at 617–628 (TPKTHSVPSATS) shows a compositional bias: polar residues. A CLTCL1/Clathrin-binding motif is present at residues 716–718 (YQW). The clathrin-binding stretch occupies residues 825–829 (LLNLD).

In terms of assembly, self-associates. Interacts with GGA1 (via GAE domain). Interacts with GGA3 (via GAE domain), AP1G1 (via GAE domain) and AP1G2 (via GAE domain). Component of the aftiphilin/p200/gamma-synergin complex, at least composed of AFTPH/aftiphilin, HEATR5B/p200a and SYNRG/gamma-synergin, which plays a role in the AP1G1/AP-1-mediated protein trafficking from early to recycling endosomes. Within the complex interacts with HEATR5B/p200a and SYNRG/gamma-synergin; the interactions are direct. Interacts with AP1G1/AP-1; the interaction is required to recruit AFTPH/aftiphilin to the perinuclear region of the cell. Interacts with CLTCL1/Clathrin.

It localises to the cytoplasm. Its subcellular location is the perinuclear region. It is found in the cytoplasmic vesicle. The protein resides in the clathrin-coated vesicle. Its function is as follows. Component of clathrin-coated vesicles. Component of the aftiphilin/p200/gamma-synergin complex, which plays roles in AP1G1/AP-1-mediated protein trafficking including the trafficking of transferrin from early to recycling endosomes, and the membrane trafficking of furin and the lysosomal enzyme cathepsin D between the trans-Golgi network (TGN) and endosomes. The sequence is that of Aftiphilin (AFTPH) from Homo sapiens (Human).